The sequence spans 559 residues: Probable D-2-hydroxyglutarate dehydrogenase, mitochondrial (559 aa).

Residues 1-80 (MARRAAAGLL…MNFEVQKRSF (80 aa)) constitute a mitochondrion transit peptide. The FAD-binding PCMH-type domain occupies 131 to 310 (YKGSSQLLLL…TKIAILTPAK (180 aa)).

The protein belongs to the FAD-binding oxidoreductase/transferase type 4 family. In terms of assembly, homodimer. Requires FAD as cofactor.

It is found in the mitochondrion. It carries out the reaction (R)-2-hydroxyglutarate + A = 2-oxoglutarate + AH2. Functionally, catalyzes the oxidation of D-2-hydroxyglutarate to alpha-ketoglutarate. The sequence is that of Probable D-2-hydroxyglutarate dehydrogenase, mitochondrial (D2HGDH) from Oryza sativa subsp. indica (Rice).